The chain runs to 447 residues: Protein TIC 40, chloroplastic (447 aa).

Residues 1–43 (MENLTLVSCSASSPKLLIGCNFTSSLKNPTGFSRRTPNIVLRC) constitute a chloroplast transit peptide. Residues 44-76 (SKISASAQSQSPSSRPENTGEIVVVKQRSKAFA) constitute a chloroplast; inner membrane transit peptide. At 77-104 (SIFSSSRDQQTTSVASPSVPVPPPSSST) the chain is on the chloroplast intermembrane side. Residues 105-125 (IGSPLFWIGVGVGLSALFSYV) form a helical membrane-spanning segment. Residues 126–447 (TSNLKKYAMQ…ISQLFPGMTG (322 aa)) are Stromal-facing. The span at 148–160 (QNSQFNNSGFPSG) shows a compositional bias: low complexity. 2 disordered regions span residues 148-214 (QNSQ…DIEV) and 231-261 (KNYA…TNSP). Residues 161 to 171 (SPFPFPFPPQT) are compositionally biased toward pro residues. A compositionally biased stretch (low complexity) spans 172 to 186 (SPASSPFQSQSQSSG). 2 consecutive STI1 domains span residues 310–344 (DPTV…RQQL) and 386–425 (PEEV…IMKY).

As to quaternary structure, part of the Tic complex. Interacts with HSP93, TIC110 and LTD. In terms of tissue distribution, expressed in seedlings, flowers, leaves, stems and roots.

The protein resides in the plastid. The protein localises to the chloroplast inner membrane. Its function is as follows. Involved in protein precursor import into chloroplasts. Part of the motor complex consisting of a co-chaperone (TIC40) and a chaperone (HSP93) associated with the import channel (TIC110). Causes the release of bound transit peptides from TIC110 and stimulates ATP hydrolysis by HSP93. Involved in reinsertion of proteins from the chloroplast stroma into the inner membrane. In Arabidopsis thaliana (Mouse-ear cress), this protein is Protein TIC 40, chloroplastic (TIC40).